We begin with the raw amino-acid sequence, 187 residues long: Proline-rich protein 29 (187 aa).

The tract at residues 133–187 (HQPPWQGEPRIQHQPPASRQEEVRDVPPPPPPSATGTVGADVPPASDYYDAESLP) is disordered.

In Mus musculus (Mouse), this protein is Proline-rich protein 29 (Prr29).